We begin with the raw amino-acid sequence, 147 residues long: CRISP-1 (147 aa).

It belongs to the CRISP family. Expressed by the venom gland.

The protein localises to the secreted. The sequence is that of CRISP-1 from Phoneutria keyserlingi (Brazilian wandering spider).